Here is a 728-residue protein sequence, read N- to C-terminus: Leucine-rich repeat and calponin homology domain-containing protein 1 (728 aa).

Residues 24 to 36 (HHPHHHHHHHQHH) show a composition bias toward basic residues. Positions 24–57 (HHPHHHHHHHQHHGGTGAPGGAGGGGGGSGGFNL) are disordered. The span at 37-54 (GGTGAPGGAGGGGGGSGG) shows a compositional bias: gly residues. LRR repeat units lie at residues 98–119 (DTVQADLSKNRLVEVPMELCHF), 121–143 (SLEILNLYHNCIRVIPEAIVNLQ), 144–166 (MLTYLNLSRNQLSALPACLCGLP), 167–187 (LKVLIASNNKLGSLPEEIGQL), 189–210 (QLMELDVSCNEITALPQQIGQL), 212–234 (SLRELNVRRNYLKVLPQELVDLS), 235–255 (LVKFDFSCNKVLVIPICFREM), 257–278 (QLQVLLLENNPLQSPPAQICTK), and 283–304 (IFKYLSIQACQIKTADSLYLHT). Positions 311–322 (HQHVEDGKKDSD) are enriched in basic and acidic residues. Positions 311 to 348 (HQHVEDGKKDSDSGVGSDNGDKRLSATEPSDEDTVSLN) are disordered. Ser-370 carries the phosphoserine modification. The segment at 377 to 398 (HQEFQPEPSLLGDSTNSGEERD) is disordered. Residue Ser-409 is modified to Phosphoserine. The segment covering 516–525 (LQSNGSQYSP) has biased composition (polar residues). The interval 516 to 547 (LQSNGSQYSPNEIRENSPAVSPTTNSTAPFGL) is disordered. 2 positions are modified to phosphoserine: Ser-532 and Ser-536. Residues 533-543 (PAVSPTTNSTA) show a composition bias toward polar residues. Thr-568 is subject to Phosphothreonine. A Calponin-homology (CH) domain is found at 576-692 (MREEKELVEQ…TLLALGEKAP (117 aa)).

In terms of assembly, interacts (via LRR repeats) with unphosphorylated DOCK8 (via DHR-2 domain); the interaction prevents the interaction between DOCK8 and CDC42.

The protein resides in the cytoplasm. Its function is as follows. Acts as a negative regulator of GTPase CDC42 by sequestering CDC42-guanine exchange factor DOCK8. Probably by preventing CDC42 activation, negatively regulates CD4(+) T-cell migration. The polypeptide is Leucine-rich repeat and calponin homology domain-containing protein 1 (LRCH1) (Homo sapiens (Human)).